The following is a 273-amino-acid chain: MSNSRQHQGHFARKRFGQNFLVDHGVIDSIVTTIGPARGQRMVEIGPGLGALTEPLIARLATPESPLHAVELDRDLIGRLQQRFGPLLELHAGDALAFDFRSLAAPGDKPSLRIVGNLPYNISSPLLFHLMTFADAVIDQHFMLQNEVVERMVAEPGTKAFSRLSVMLQYRYVMEKMLDVPPESFQPPPKVDSAIVRMIPYEPHELPDVDPVLLGEVVTAAFSQRRKMLRNTLGDYRETIDFDGLGFDLARRAEDVSVAEYVGVAQALAAVRR.

S-adenosyl-L-methionine is bound by residues Asn-19, Leu-21, Gly-46, Glu-71, Asp-94, and Asn-117.

Belongs to the class I-like SAM-binding methyltransferase superfamily. rRNA adenine N(6)-methyltransferase family. RsmA subfamily.

It localises to the cytoplasm. It catalyses the reaction adenosine(1518)/adenosine(1519) in 16S rRNA + 4 S-adenosyl-L-methionine = N(6)-dimethyladenosine(1518)/N(6)-dimethyladenosine(1519) in 16S rRNA + 4 S-adenosyl-L-homocysteine + 4 H(+). In terms of biological role, specifically dimethylates two adjacent adenosines (A1518 and A1519) in the loop of a conserved hairpin near the 3'-end of 16S rRNA in the 30S particle. May play a critical role in biogenesis of 30S subunits. In Burkholderia ambifaria (strain MC40-6), this protein is Ribosomal RNA small subunit methyltransferase A.